The chain runs to 370 residues: Peptidyl-prolyl cis-trans isomerase D (370 aa).

Ser5 carries the phosphoserine modification. The region spanning 19-183 (FFDVDIGGER…KLCVIAECGE (165 aa)) is the PPIase cyclophilin-type domain. The residue at position 171 (Lys171) is an N6-acetyllysine. The interval 185 to 215 (KEGDDWGIFPKDGSGDSHPDFPEDADVDLKD) is chaperone activity. Ser198 carries the post-translational modification Phosphoserine. An interaction with HSP90AB1 region spans residues 214 to 370 (KDVDKILLIS…EKAAYAKMFA (157 aa)). TPR repeat units follow at residues 223 to 256 (SEDLKNIGNTFFKSQNWEMAIKKYTKVLRYVEGS), 273 to 306 (LSCVLNIGACKLKMSDWQGAVDSCLEALEIDPSN), and 307 to 340 (TKALYRRAQGWQGLKEYDQALADLKKAQEIAPED).

It belongs to the cyclophilin-type PPIase family. PPIase D subfamily. As to quaternary structure, identified in ESR1 or NR3C1/GCR steroid receptor-chaperone complexes. Found in HSP90 chaperone complexes with kinase clients LCK or EIF2AK1. Two monomers associate with one HSP90 homodimer. Interacts with HSP90AA1. Interacts with HSP90AB1; PPID and FKBP4 compete for binding to HSP90AB1 and the interaction is mutually exclusive with the PPID:HSPA8 interaction. Interacts with HSPA8; PPID and STIP1 but not FKBP4 compete for binding to HSPA8 and the interaction is mutually exclusive with the PPID:HSP90AB1 interaction. Interacts with S100A1 and S100A2; the interactions dissociate the PPID:HSP90AA1 interaction. Interacts with S100A6. Interacts with MYB, ILF2, XRCC6, RACK1 and RPS3. Interacts with cytoplasmic dynein 1 intermediate chain (DYNC1I1 or DYNC1I2). The N-terminus is blocked. In terms of tissue distribution, detected in heart, thymis and brain.

The protein localises to the cytoplasm. It localises to the nucleus. Its subcellular location is the nucleolus. The protein resides in the nucleoplasm. It carries out the reaction [protein]-peptidylproline (omega=180) = [protein]-peptidylproline (omega=0). Its activity is regulated as follows. Less sensitive to inhibition by cyclosporin A than is CYP-18. PPIase that catalyzes the cis-trans isomerization of proline imidic peptide bonds in oligopeptides and may therefore assist protein folding. Proposed to act as a co-chaperone in HSP90 complexes such as in unligated steroid receptors heterocomplexes. Different co-chaperones seem to compete for association with HSP90 thus establishing distinct HSP90-co-chaperone-receptor complexes with the potential to exert tissue-specific receptor activity control. May have a preference for estrogen receptor complexes and is not found in glucocorticoid receptor complexes. May be involved in cytoplasmic dynein-dependent movement of the receptor from the cytoplasm to the nucleus. May regulate MYB by inhibiting its DNA-binding activity. Involved in regulation of AHR signaling by promoting the formation of the AHR:ARNT dimer; the function is independent of HSP90 but requires the chaperone activity. Involved in regulation of UV radiation-induced apoptosis. The chain is Peptidyl-prolyl cis-trans isomerase D from Bos taurus (Bovine).